Reading from the N-terminus, the 309-residue chain is Thermolabile glutaminase (309 aa).

Positions 64, 114, 160, 167, 191, 243, and 261 each coordinate substrate.

The protein belongs to the glutaminase family. As to quaternary structure, homotetramer.

The catalysed reaction is L-glutamine + H2O = L-glutamate + NH4(+). The protein is Thermolabile glutaminase (glsA) of Rhizobium etli (strain ATCC 51251 / DSM 11541 / JCM 21823 / NBRC 15573 / CFN 42).